Here is a 133-residue protein sequence, read N- to C-terminus: Large ribosomal subunit protein bL20 (133 aa).

The protein belongs to the bacterial ribosomal protein bL20 family.

Its function is as follows. Binds directly to 23S ribosomal RNA and is necessary for the in vitro assembly process of the 50S ribosomal subunit. It is not involved in the protein synthesizing functions of that subunit. The chain is Large ribosomal subunit protein bL20 from Rubrobacter xylanophilus (strain DSM 9941 / JCM 11954 / NBRC 16129 / PRD-1).